We begin with the raw amino-acid sequence, 263 residues long: Indolethylamine N-methyltransferase (263 aa).

Lys-13 is modified (N6-succinyllysine). S-adenosyl-L-methionine is bound by residues Tyr-20, Tyr-25, 63–64, Tyr-69, Asp-85, and Asn-90; that span reads GS. Lys-96 bears the N6-succinyllysine mark. S-adenosyl-L-methionine is bound by residues 142 to 143 and Leu-163; that span reads DA.

This sequence belongs to the class I-like SAM-binding methyltransferase superfamily. NNMT/PNMT/TEMT family. As to quaternary structure, monomer. Highly expressed in lung, also detected in liver and at very low levels in brain.

It is found in the cytoplasm. The enzyme catalyses a tertiary amine + S-adenosyl-L-methionine = a methylated tertiary amine + S-adenosyl-L-homocysteine + H(+). The catalysed reaction is a secondary amine + S-adenosyl-L-methionine = a methylated secondary amine + S-adenosyl-L-homocysteine + H(+). It carries out the reaction a primary amine + S-adenosyl-L-methionine = a methylated primary amine + S-adenosyl-L-homocysteine + H(+). It catalyses the reaction dimethyl sulfide + S-adenosyl-L-methionine = trimethylsulfonium + S-adenosyl-L-homocysteine. Functionally, catalyzes the N-methylation of tryptamine and structurally related compounds. Functions as a thioether S-methyltransferase and is active with a variety of thioethers and the corresponding selenium and tellurium compounds, including 3-methylthiopropionaldehyde, dimethyl selenide, dimethyl telluride, 2-methylthioethylamine, 2-methylthioethanol, methyl-n-propyl sulfide and diethyl sulfide. Plays an important role in the detoxification of selenium compounds. The chain is Indolethylamine N-methyltransferase (INMT) from Oryctolagus cuniculus (Rabbit).